A 733-amino-acid chain; its full sequence is DNA repair and recombination protein RAD54-like (733 aa).

The tract at residues 1–35 (LAKRKAGGEEEDGEWRPPATQKRQKAGSEAESADC) is disordered. The 176-residue stretch at 159–334 (SRRIPGSHGC…FSLVHFVNSG (176 aa)) folds into the Helicase ATP-binding domain. 172-179 (DEMGLGKT) contacts ATP. The short motif at 285 to 288 (DEGH) is the DEGH box element. The Helicase C-terminal domain occupies 488-642 (LVLDYILAVT…CVVDEEQDVE (155 aa)). An N6-acetyllysine modification is found at Lys504. Ser561 carries the post-translational modification Phosphoserine; by NEK1.

This sequence belongs to the SNF2/RAD54 helicase family. In terms of assembly, homohexamer. Interacts (via N-terminus) with RAD51. Interacts with NAP1L1. Interacts with BRD9; this interaction orchestrates RAD51-RAD54 complex formation. Acetylated. Acetylation promotes interaction with BRD9, and subsequently with RAD54, which is essential for homologous recombination (HR). In terms of processing, phosphorylated. Phosphorylation at Ser-561 by NEK1 specifically in G2 phase allows efficient removal of RAD51 filaments from DNA. In terms of tissue distribution, highly expressed in bursa, thymus, testis, and ovary. Low level of expression seen in all other organs tested.

It is found in the nucleus. Plays an essential role in homologous recombination (HR) which is a major pathway for repairing DNA double-strand breaks (DSBs), single-stranded DNA (ssDNA) gaps, and stalled or collapsed replication forks. Acts as a molecular motor during the homology search and guides RAD51 ssDNA along a donor dsDNA thereby changing the homology search from the diffusion-based mechanism to a motor-guided mechanism. Plays also an essential role in RAD51-mediated synaptic complex formation which consists of three strands encased in a protein filament formed once homology is recognized. Once DNA strand exchange occured, dissociates RAD51 from nucleoprotein filaments formed on dsDNA. The sequence is that of DNA repair and recombination protein RAD54-like (RAD54L) from Gallus gallus (Chicken).